The following is a 323-amino-acid chain: Lipoyl synthase (323 aa).

[4Fe-4S] cluster is bound by residues cysteine 65, cysteine 70, cysteine 76, cysteine 91, cysteine 95, cysteine 98, and serine 304. The 217-residue stretch at 77–293 (FNNGTATFMI…KKEALSIGFT (217 aa)) folds into the Radical SAM core domain.

This sequence belongs to the radical SAM superfamily. Lipoyl synthase family. It depends on [4Fe-4S] cluster as a cofactor.

Its subcellular location is the cytoplasm. The catalysed reaction is [[Fe-S] cluster scaffold protein carrying a second [4Fe-4S](2+) cluster] + N(6)-octanoyl-L-lysyl-[protein] + 2 oxidized [2Fe-2S]-[ferredoxin] + 2 S-adenosyl-L-methionine + 4 H(+) = [[Fe-S] cluster scaffold protein] + N(6)-[(R)-dihydrolipoyl]-L-lysyl-[protein] + 4 Fe(3+) + 2 hydrogen sulfide + 2 5'-deoxyadenosine + 2 L-methionine + 2 reduced [2Fe-2S]-[ferredoxin]. It functions in the pathway protein modification; protein lipoylation via endogenous pathway; protein N(6)-(lipoyl)lysine from octanoyl-[acyl-carrier-protein]: step 2/2. Its function is as follows. Catalyzes the radical-mediated insertion of two sulfur atoms into the C-6 and C-8 positions of the octanoyl moiety bound to the lipoyl domains of lipoate-dependent enzymes, thereby converting the octanoylated domains into lipoylated derivatives. This chain is Lipoyl synthase, found in Buchnera aphidicola subsp. Acyrthosiphon pisum (strain 5A).